The sequence spans 122 residues: Large ribosomal subunit protein uL14 (122 aa).

This sequence belongs to the universal ribosomal protein uL14 family. Part of the 50S ribosomal subunit. Forms a cluster with proteins L3 and L19. In the 70S ribosome, L14 and L19 interact and together make contacts with the 16S rRNA in bridges B5 and B8.

In terms of biological role, binds to 23S rRNA. Forms part of two intersubunit bridges in the 70S ribosome. In Aeromonas salmonicida (strain A449), this protein is Large ribosomal subunit protein uL14.